We begin with the raw amino-acid sequence, 658 residues long: Carnitine O-palmitoyltransferase 2, mitochondrial (658 aa).

Residues 1-25 (MMPRLLLRDWPRCPSLVLGAPSRPL) constitute a mitochondrion transit peptide. The Mitochondrial matrix portion of the chain corresponds to 26 to 178 (SAVSGPAEYL…GLLEPEVFHL (153 aa)). Lysine 69 bears the N6-succinyllysine mark. Lysine 79 is modified (N6-acetyllysine). At lysine 85 the chain carries N6-succinyllysine. The note=Mitochondrial inner membrane intramembrane region spans 179–208 (NPARSDTDAFKRLIRFVPSSLSWYGAYLVN). Topologically, residues 209-658 (AYPLDMSQYF…DALEGKAIKT (450 aa)) are mitochondrial matrix. Lysine 239 bears the N6-acetyllysine; alternate mark. Residue lysine 239 is modified to N6-succinyllysine; alternate. Lysine 305 bears the N6-acetyllysine mark. Histidine 372 (proton acceptor) is an active-site residue. Lysine 418 carries the post-translational modification N6-acetyllysine; alternate. An N6-succinyllysine; alternate modification is found at lysine 418. Residues lysine 424 and lysine 439 each carry the N6-succinyllysine modification. CoA is bound at residue 452–464 (GKEFLKKKKLSPD). (R)-carnitine is bound by residues tyrosine 486, serine 488, and threonine 499. An N6-acetyllysine; alternate mark is found at lysine 510 and lysine 544. N6-succinyllysine; alternate occurs at positions 510 and 544.

It belongs to the carnitine/choline acetyltransferase family.

It is found in the mitochondrion inner membrane. It carries out the reaction (R)-carnitine + hexadecanoyl-CoA = O-hexadecanoyl-(R)-carnitine + CoA. The enzyme catalyses octanoyl-CoA + (R)-carnitine = O-octanoyl-(R)-carnitine + CoA. The catalysed reaction is decanoyl-CoA + (R)-carnitine = O-decanoyl-(R)-carnitine + CoA. It catalyses the reaction dodecanoyl-CoA + (R)-carnitine = O-dodecanoyl-R-carnitine + CoA. It carries out the reaction tetradecanoyl-CoA + (R)-carnitine = O-tetradecanoyl-(R)-carnitine + CoA. The enzyme catalyses (R)-carnitine + octadecanoyl-CoA = O-octadecanoyl-(R)-carnitine + CoA. The catalysed reaction is eicosanoyl-CoA + (R)-carnitine = O-eicosanoyl-(R)-carnitine + CoA. It catalyses the reaction (9Z)-tetradecenoyl-CoA + (R)-carnitine = O-(9Z)-tetradecenoyl-(R)-carnitine + CoA. It carries out the reaction (5Z)-tetradecenoyl-CoA + (R)-carnitine = O-(5Z)-tetradecenoyl-(R)-carnitine + CoA. The enzyme catalyses (R)-carnitine + (9Z)-octadecenoyl-CoA = O-(9Z)-octadecenoyl-(R)-carnitine + CoA. The catalysed reaction is 4,8-dimethylnonanoyl-CoA + (R)-carnitine = O-4,8-dimethylnonanoyl-(R)-carnitine + CoA. Its pathway is lipid metabolism; fatty acid beta-oxidation. Its function is as follows. Involved in the intramitochondrial synthesis of acylcarnitines from accumulated acyl-CoA metabolites. Reconverts acylcarnitines back into the respective acyl-CoA esters that can then undergo beta-oxidation, an essential step for the mitochondrial uptake of long-chain fatty acids and their subsequent beta-oxidation in the mitochondrion. Active with medium (C8-C12) and long-chain (C14-C18) acyl-CoA esters. The polypeptide is Carnitine O-palmitoyltransferase 2, mitochondrial (Mus musculus (Mouse)).